Here is a 199-residue protein sequence, read N- to C-terminus: Protein C (199 aa).

Polar residues-rich tracts occupy residues 19-34 (QLIS…SYSA) and 43-57 (KTTQ…SAPP). Residues 19-67 (QLISPRPSTSLNSYSAPTPKKTYRKTTQSTQEPSNSAPPSVNQKSNQQK) form a disordered region. Residues 58-67 (SVNQKSNQQK) are compositionally biased toward low complexity.

The protein belongs to the respirovirus protein C family.

The sequence is that of Protein C (P/V/C) from Human parainfluenza 3 virus (strain Wash/47885/57) (HPIV-3).